Reading from the N-terminus, the 449-residue chain is uncharacterized protein (449 aa).

Ser420 is modified (phosphoserine).

The protein belongs to the NAD kinase family.

It is found in the cytoplasm. The protein localises to the nucleus. This is an uncharacterized protein from Schizosaccharomyces pombe (strain 972 / ATCC 24843) (Fission yeast).